The chain runs to 147 residues: Protein-export protein SecB (147 aa).

The protein belongs to the SecB family. As to quaternary structure, homotetramer, a dimer of dimers. One homotetramer interacts with 1 SecA dimer.

It is found in the cytoplasm. Its function is as follows. One of the proteins required for the normal export of preproteins out of the cell cytoplasm. It is a molecular chaperone that binds to a subset of precursor proteins, maintaining them in a translocation-competent state. It also specifically binds to its receptor SecA. The polypeptide is Protein-export protein SecB (Neisseria gonorrhoeae (strain ATCC 700825 / FA 1090)).